Here is a 477-residue protein sequence, read N- to C-terminus: Metallopeptidase AprA (477 aa).

The N-terminal stretch at 1 to 20 is a signal peptide; sequence MSKAKDKAIVSAAQASTAYS. His-183 serves as a coordination point for Zn(2+). The active site involves Glu-184. Zn(2+) contacts are provided by His-187 and His-193. Residues Arg-264, Gly-266, Thr-268, Asp-296, Gly-298, Gly-299, Asp-301, Thr-338, Glu-340, Gly-345, Gly-347, Asp-349, Asn-354, Ala-356, Asn-358, Gly-362, Gly-363, Ala-364, Gly-365, Asp-367, Gly-371, Ala-372, Gly-373, Gly-374, Asp-376, Gly-380, Gly-381, Ala-382, Gly-383, Asp-385, Asp-394, Asp-401, Asp-411, Asp-453, Ser-455, and Asp-461 each contribute to the Ca(2+) site. Hemolysin-type calcium-binding repeat units lie at residues 343–360, 361–378, and 379–391; these read FGGA…ANVI, KGGA…ADQL, and WGGA…VFGA.

This sequence belongs to the peptidase M10B family. Requires Ca(2+) as cofactor. The cofactor is Zn(2+).

It is found in the secreted. Its activity is regulated as follows. Is completely inhibited by the metal cation chelators 1,10-phenanthroline and EDTA, but PMSF, pepstatin A and E-64 have no effect on activity. Functionally, peptidase able to cleave azocasein and the milk substrates beta-casein and Na-caseinate. Can withstand UHT processing of milk, and is able to spoil UHT milk over the storage period. The protein is Metallopeptidase AprA of Pseudomonas marginalis (Pseudomonas panacis).